The primary structure comprises 531 residues: Polyamine aminopropyltransferase 1 (531 aa).

A run of 7 helical transmembrane segments spans residues 27 to 47 (FLLLLAVFLCAACGLVYELAL), 59 to 79 (VLQTSVVISVMVFAMGVGSLA), 96 to 116 (GVLALVGGLSVLMLYAAFAWL), 122 to 142 (AMIVVSLVVGLLIGAEIPLLM), 160 to 180 (MFAVDYIGALVGGLCFPLFLL), 188 to 208 (GALVVGVVNAVAGVIVVVFIF), and 218 to 238 (AGLLAGVALVLAALGTTYVLA). The segment at 205-476 (VFIFRRQTGR…VLARPGTEAP (272 aa)) is spermidine synthase. A PABS domain is found at 233-471 (TTYVLADDLE…GNWGFVLARP (239 aa)). An S-methyl-5'-thioadenosine-binding site is contributed by glutamine 263. Spermidine contacts are provided by histidine 298 and aspartate 320. S-methyl-5'-thioadenosine contacts are provided by residues glutamate 340 and 374 to 375 (DA). Aspartate 392 (proton acceptor) is an active-site residue.

This sequence belongs to the spermidine/spermine synthase family. As to quaternary structure, homodimer or homotetramer.

It is found in the cell membrane. It carries out the reaction S-adenosyl 3-(methylsulfanyl)propylamine + putrescine = S-methyl-5'-thioadenosine + spermidine + H(+). Its pathway is amine and polyamine biosynthesis; spermidine biosynthesis; spermidine from putrescine: step 1/1. Catalyzes the irreversible transfer of a propylamine group from the amino donor S-adenosylmethioninamine (decarboxy-AdoMet) to putrescine (1,4-diaminobutane) to yield spermidine. This Streptomyces coelicolor (strain ATCC BAA-471 / A3(2) / M145) protein is Polyamine aminopropyltransferase 1.